A 183-amino-acid chain; its full sequence is Ubiquitin-conjugating enzyme E2 H (183 aa).

In terms of domain architecture, UBC core spans 1 to 150 (MSSPSPGKRR…IKEYIQKYAT (150 aa)). Position 60 is an N6-acetyllysine (Lys60). Cys87 serves as the catalytic Glycyl thioester intermediate. The segment at 152 to 183 (EALKEQEEGTGDSSSESSMSDFSEDEAQDMEL) is disordered. Over residues 163–172 (DSSSESSMSD) the composition is skewed to low complexity. Acidic residues predominate over residues 173 to 183 (FSEDEAQDMEL).

Belongs to the ubiquitin-conjugating enzyme family. As to quaternary structure, interacts with MAEA and WDR26, components of the CTLH complex that contains GID4, RANBP9 and/or RANBP10, MKLN1, MAEA, RMND5A (or alternatively its paralog RMND5B), GID8, ARMC8, WDR26 and YPEL5. Autoubiquitinated in vitro in the presence of NEDD4L.

It catalyses the reaction S-ubiquitinyl-[E1 ubiquitin-activating enzyme]-L-cysteine + [E2 ubiquitin-conjugating enzyme]-L-cysteine = [E1 ubiquitin-activating enzyme]-L-cysteine + S-ubiquitinyl-[E2 ubiquitin-conjugating enzyme]-L-cysteine.. It carries out the reaction S-ubiquitinyl-[E1 ubiquitin-activating enzyme]-L-cysteine + [acceptor protein]-L-lysine = [E1 ubiquitin-activating enzyme]-L-cysteine + N(6)-monoubiquitinyl-[acceptor protein]-L-lysine.. It functions in the pathway protein modification; protein ubiquitination. In terms of biological role, accepts ubiquitin from the E1 complex and catalyzes its covalent attachment to other proteins. E2 ubiquitin conjugating enzyme that transfers ubiquitin to MAEA, a core component of the CTLH E3 ubiquitin-protein ligase complex. In vitro catalyzes 'Lys-11'- and 'Lys-48'-linked polyubiquitination. Capable, in vitro, to ubiquitinate histone H2A. The sequence is that of Ubiquitin-conjugating enzyme E2 H (UBE2H) from Homo sapiens (Human).